The chain runs to 239 residues: uncharacterized protein (239 aa).

The disordered stretch occupies residues 104–127 (LPATSQSSQPKSTNSSTESSSIGQ). Residues 107–127 (TSQSSQPKSTNSSTESSSIGQ) show a composition bias toward low complexity. Residues 134 to 202 (ENEINLNKNK…HFIQNNQESF (69 aa)) are a coiled coil. Residues 211 to 231 (VKIGSAFIIYIFYNVLFFIIV) traverse the membrane as a helical segment.

Its subcellular location is the membrane. This is an uncharacterized protein from Dictyostelium discoideum (Social amoeba).